Reading from the N-terminus, the 215-residue chain is High frequency lysogenization protein HflD homolog (215 aa).

The protein belongs to the HflD family.

It is found in the cytoplasm. The protein localises to the cell inner membrane. This Haemophilus ducreyi (strain 35000HP / ATCC 700724) protein is High frequency lysogenization protein HflD homolog.